A 224-amino-acid polypeptide reads, in one-letter code: Dickkopf-related protein 4 (224 aa).

The first 18 residues, 1-18, serve as a signal peptide directing secretion; sequence MVAAVLLGLSWLCSPLGA. Residues 41–90 are DKK-type Cys-1; sequence CLSDTDCNTRKFCLQPRDEKPFCATCRGLRRRCQRDAMCCPGTLCVNDVC. A disordered region spans residues 109 to 139; that stretch reads GTHAEGTTGHPVQENQPKRKPSIKKSQGRKG. The span at 126–136 shows a compositional bias: basic residues; it reads KRKPSIKKSQG. 5 disulfides stabilise this stretch: C145/C157, C151/C166, C156/C194, C176/C202, and C196/C218. The tract at residues 145-218 is DKK-type Cys-2; it reads CLRTFDCGPG…NRQHARLRVC (74 aa).

It belongs to the dickkopf family. Interacts with LRP5 and LRP6. In terms of processing, appears to be not glycosylated. Can be proteolytically processed by a furin-like protease. Expressed in cerebellum, T-cells, esophagus and lung.

It localises to the secreted. Its function is as follows. Antagonizes canonical Wnt signaling by inhibiting LRP5/6 interaction with Wnt and by forming a ternary complex with the transmembrane protein KREMEN that promotes internalization of LRP5/6. DKKs play an important role in vertebrate development, where they locally inhibit Wnt regulated processes such as antero-posterior axial patterning, limb development, somitogenesis and eye formation. In the adult, Dkks are implicated in bone formation and bone disease, cancer and Alzheimer disease. The polypeptide is Dickkopf-related protein 4 (DKK4) (Homo sapiens (Human)).